We begin with the raw amino-acid sequence, 121 residues long: Ribonuclease P protein component (121 aa).

The protein belongs to the RnpA family. As to quaternary structure, consists of a catalytic RNA component (M1 or rnpB) and a protein subunit.

The enzyme catalyses Endonucleolytic cleavage of RNA, removing 5'-extranucleotides from tRNA precursor.. Functionally, RNaseP catalyzes the removal of the 5'-leader sequence from pre-tRNA to produce the mature 5'-terminus. It can also cleave other RNA substrates such as 4.5S RNA. The protein component plays an auxiliary but essential role in vivo by binding to the 5'-leader sequence and broadening the substrate specificity of the ribozyme. The polypeptide is Ribonuclease P protein component (Rickettsia prowazekii (strain Madrid E)).